The primary structure comprises 509 residues: Bifunctional purine biosynthesis protein PurH (509 aa).

One can recognise an MGS-like domain in the interval 1 to 144; the sequence is MKRALISVSD…KNYAAVTVVV (144 aa).

It belongs to the PurH family.

It carries out the reaction (6R)-10-formyltetrahydrofolate + 5-amino-1-(5-phospho-beta-D-ribosyl)imidazole-4-carboxamide = 5-formamido-1-(5-phospho-D-ribosyl)imidazole-4-carboxamide + (6S)-5,6,7,8-tetrahydrofolate. It catalyses the reaction IMP + H2O = 5-formamido-1-(5-phospho-D-ribosyl)imidazole-4-carboxamide. Its pathway is purine metabolism; IMP biosynthesis via de novo pathway; 5-formamido-1-(5-phospho-D-ribosyl)imidazole-4-carboxamide from 5-amino-1-(5-phospho-D-ribosyl)imidazole-4-carboxamide (10-formyl THF route): step 1/1. The protein operates within purine metabolism; IMP biosynthesis via de novo pathway; IMP from 5-formamido-1-(5-phospho-D-ribosyl)imidazole-4-carboxamide: step 1/1. The chain is Bifunctional purine biosynthesis protein PurH from Listeria innocua serovar 6a (strain ATCC BAA-680 / CLIP 11262).